A 299-amino-acid chain; its full sequence is Protoheme IX farnesyltransferase (299 aa).

8 helical membrane-spanning segments follow: residues 24 to 44 (VVAL…DQGM), 46 to 66 (WNAL…AAAI), 94 to 114 (VHAL…LAWG), 118 to 138 (LTAW…TLFL), 146 to 166 (IVLG…SVTG), 172 to 192 (ALLL…ALAV), 232 to 252 (LPFI…ALGV), and 278 to 298 (ITYL…PVTL).

Belongs to the UbiA prenyltransferase family. Protoheme IX farnesyltransferase subfamily.

It localises to the cell inner membrane. The catalysed reaction is heme b + (2E,6E)-farnesyl diphosphate + H2O = Fe(II)-heme o + diphosphate. It functions in the pathway porphyrin-containing compound metabolism; heme O biosynthesis; heme O from protoheme: step 1/1. In terms of biological role, converts heme B (protoheme IX) to heme O by substitution of the vinyl group on carbon 2 of heme B porphyrin ring with a hydroxyethyl farnesyl side group. The chain is Protoheme IX farnesyltransferase from Hahella chejuensis (strain KCTC 2396).